The chain runs to 1025 residues: Exportin-T (1025 aa).

It belongs to the exportin family.

Its subcellular location is the nucleus. The protein localises to the cytoplasm. Its function is as follows. tRNA nucleus export receptor which facilitates tRNA translocation across the nuclear pore complex. Involved in pre-tRNA splicing, probably by affecting the interaction of pre-tRNA with splicing endonuclease. The protein is Exportin-T (LOS1) of Yarrowia lipolytica (strain CLIB 122 / E 150) (Yeast).